The chain runs to 142 residues: Large ribosomal subunit protein uL13 (142 aa).

Belongs to the universal ribosomal protein uL13 family. As to quaternary structure, part of the 50S ribosomal subunit.

Its function is as follows. This protein is one of the early assembly proteins of the 50S ribosomal subunit, although it is not seen to bind rRNA by itself. It is important during the early stages of 50S assembly. The chain is Large ribosomal subunit protein uL13 from Pseudomonas putida (strain ATCC 700007 / DSM 6899 / JCM 31910 / BCRC 17059 / LMG 24140 / F1).